Consider the following 181-residue polypeptide: NADH-quinone oxidoreductase subunit I (181 aa).

2 consecutive 4Fe-4S ferredoxin-type domains span residues 52–81 and 91–120; these read TRDSAGHERCVACNLCAVSCPVGCISLKKS and EFFRINFSRCIFCGMCEEACPTAAIQLISD. Positions 61, 64, 67, 71, 100, 103, 106, and 110 each coordinate [4Fe-4S] cluster.

This sequence belongs to the complex I 23 kDa subunit family. NDH-1 is composed of 13 different subunits. Subunits NuoA, H, J, K, L, M, N constitute the membrane sector of the complex. The cofactor is [4Fe-4S] cluster.

It is found in the cell inner membrane. It carries out the reaction a quinone + NADH + 5 H(+)(in) = a quinol + NAD(+) + 4 H(+)(out). Functionally, NDH-1 shuttles electrons from NADH, via FMN and iron-sulfur (Fe-S) centers, to quinones in the respiratory chain. The immediate electron acceptor for the enzyme in this species is believed to be ubiquinone. Couples the redox reaction to proton translocation (for every two electrons transferred, four hydrogen ions are translocated across the cytoplasmic membrane), and thus conserves the redox energy in a proton gradient. In Blochmanniella floridana, this protein is NADH-quinone oxidoreductase subunit I.